The following is a 486-amino-acid chain: Vesicular GABA transporter (486 aa).

Over 1–93 (MASNRFQNLQ…EASEPISALQ (93 aa)) the chain is Cytoplasmic. Positions 29–46 (LNEVPSYQNQPQTGESGS) are enriched in polar residues. Residues 29–85 (LNEVPSYQNQPQTGESGSNPPPHDRLEPIQESVVSEQPQKDDINKQEEAKDDGHGEA) form a disordered region. Over residues 66-85 (PQKDDINKQEEAKDDGHGEA) the composition is skewed to basic and acidic residues. Residues 94–114 (AAWNVTNAIQGMFIVGLPIAV) form a helical membrane-spanning segment. Residues 115–119 (KVGGW) lie on the Lumenal, vesicle side of the membrane. The helical transmembrane segment at 120–140 (WSIGAMVGVAYVCYWTGVLLI) threads the bilayer. Residues 141–167 (ECLYENGVKKRKTYREIADFYKPGFGK) are Cytoplasmic-facing. The helical transmembrane segment at 168-188 (WVLAAQLTELLSTCIIYLVLA) threads the bilayer. The Lumenal, vesicle portion of the chain corresponds to 189–203 (ADLLQSCFPSVDKAG). Residues 204–224 (WMMITSASLLTCSFLDDLQIV) form a helical membrane-spanning segment. The Cytoplasmic portion of the chain corresponds to 225-228 (SRLS). The helical transmembrane segment at 229 to 249 (FFNAISHLIVNLIMVLYCLSF) threads the bilayer. The Lumenal, vesicle segment spans residues 250–263 (VSQWSFSTITFSLN). Residues 264-284 (INTLPTIVGMVVFGYTSHIFL) form a helical membrane-spanning segment. Topologically, residues 285 to 305 (PNLEGNMKNPAQFNVMLKWSH) are cytoplasmic. The helical transmembrane segment at 306 to 326 (IAAAVFKVVFGMLGFLTFGEL) threads the bilayer. At 327-341 (TQEEISNSLPNQSFK) the chain is on the lumenal, vesicle side. Residue Asn337 is glycosylated (N-linked (GlcNAc...) asparagine). A helical transmembrane segment spans residues 342–362 (ILVNLILVVKALLSYPLPFYA). Residues 363–398 (AVQLLKNNLFLGYPQTPFTSCYSPDKSLREWAVTLR) are Cytoplasmic-facing. The helical transmembrane segment at 399–419 (IILVLFTLFVALSVPYLVELM) threads the bilayer. Topologically, residues 420 to 421 (GL) are lumenal, vesicle. Residues 422–442 (VGNITGTMLSFIWPALFHLYI) traverse the membrane as a helical segment. Residues 443–457 (KEKTLNNFEKRFDQG) are Cytoplasmic-facing. A helical transmembrane segment spans residues 458-478 (IIIMGCSVCISGVYFSSMELL). The Lumenal, vesicle segment spans residues 479-486 (RAINSADS).

The protein belongs to the amino acid/polyamine transporter 2 family.

Its subcellular location is the cytoplasmic vesicle membrane. Involved in the uptake of GABA into the synaptic vesicles. In Caenorhabditis elegans, this protein is Vesicular GABA transporter (unc-47).